The following is an 89-amino-acid chain: Small ribosomal subunit protein uS15 (89 aa).

Belongs to the universal ribosomal protein uS15 family. In terms of assembly, part of the 30S ribosomal subunit. Forms a bridge to the 50S subunit in the 70S ribosome, contacting the 23S rRNA.

One of the primary rRNA binding proteins, it binds directly to 16S rRNA where it helps nucleate assembly of the platform of the 30S subunit by binding and bridging several RNA helices of the 16S rRNA. Functionally, forms an intersubunit bridge (bridge B4) with the 23S rRNA of the 50S subunit in the ribosome. This is Small ribosomal subunit protein uS15 from Pseudomonas fluorescens (strain ATCC BAA-477 / NRRL B-23932 / Pf-5).